Here is an 879-residue protein sequence, read N- to C-terminus: Levansucrase (879 aa).

A signal peptide spans M1 to A37. 7 consecutive repeat copies span residues D66–N81, D82–N97, D98–N113, D114–N129, D130–N145, D146–N161, and D162–N177. The 7 X 16 AA tandem repeats of D-N-A-T-S-G-S-T-K-Q-E-S-S-[IV]-A-N stretch occupies residues D66–N177. Polar residues-rich tracts occupy residues D66–K180 and N189–Q213. The disordered stretch occupies residues D66–Q213. Sucrose is bound by residues W311, D312, and S382. D312 (nucleophile) is an active-site residue. D460 lines the Ca(2+) pocket. R465 and D466 together coordinate sucrose. Ca(2+)-binding residues include Q491, L528, N530, and D562. A sucrose-binding site is contributed by E563. The active-site Proton donor/acceptor is the E565. R583 contributes to the sucrose binding site. Residues S743–Q830 form a disordered region. Residues V754–T821 show a composition bias toward polar residues. Residues L841–G845 carry the LPXTG sorting signal motif. T844 bears the Pentaglycyl murein peptidoglycan amidated threonine mark. Positions G845–D879 are cleaved as a propeptide — removed by sortase.

Belongs to the glycosyl hydrolase 68 family.

It is found in the secreted. The protein localises to the cell wall. The enzyme catalyses [6)-beta-D-fructofuranosyl-(2-&gt;](n) alpha-D-glucopyranoside + sucrose = [6)-beta-D-fructofuranosyl-(2-&gt;](n+1) alpha-D-glucopyranoside + D-glucose. With respect to regulation, ca(2+) may play an important structural role and promote stability of levansucrase. Functionally, fructosyltransferase that catalyzes the polymerization of the fructose moiety of sucrose to produce levan polymer and the fructo-oligosaccharide (FOS) 1-kestose. Also displays sucrose hydrolase activity. This is Levansucrase from Fructilactobacillus sanfranciscensis (Lactobacillus sanfranciscensis).